The following is an 860-amino-acid chain: Leucine--tRNA ligase (860 aa).

The short motif at 42–52 (PYPSGRLHMGH) is the 'HIGH' region element. Residues 619-623 (KMSKS) carry the 'KMSKS' region motif. Lys622 is an ATP binding site.

Belongs to the class-I aminoacyl-tRNA synthetase family.

It is found in the cytoplasm. The enzyme catalyses tRNA(Leu) + L-leucine + ATP = L-leucyl-tRNA(Leu) + AMP + diphosphate. The protein is Leucine--tRNA ligase of Actinobacillus succinogenes (strain ATCC 55618 / DSM 22257 / CCUG 43843 / 130Z).